Consider the following 400-residue polypeptide: GTPase Obg (400 aa).

The Obg domain occupies 1–159; the sequence is MRFVDEAVIT…REIRLELKVL (159 aa). Residues 160–333 enclose the OBG-type G domain; it reads ADVGLLGMPN…VVYYLMDQIE (174 aa). Residues 166 to 173, 191 to 195, 213 to 216, 283 to 286, and 314 to 316 contribute to the GTP site; these read GMPNAGKS, FTTMV, DIPG, NKLD, and SGL. The Mg(2+) site is built by S173 and T193.

The protein belongs to the TRAFAC class OBG-HflX-like GTPase superfamily. OBG GTPase family. Monomer. Mg(2+) serves as cofactor.

Its subcellular location is the cytoplasm. An essential GTPase which binds GTP, GDP and possibly (p)ppGpp with moderate affinity, with high nucleotide exchange rates and a fairly low GTP hydrolysis rate. Plays a role in control of the cell cycle, stress response, ribosome biogenesis and in those bacteria that undergo differentiation, in morphogenesis control. The chain is GTPase Obg from Acinetobacter baylyi (strain ATCC 33305 / BD413 / ADP1).